The following is a 232-amino-acid chain: MPPLRWQACLFITINAVALSMLLFDAPVGASERPAAVKELGELLTGFGDSAWLICISILLFFQGKAGYKLLKTARSKAQALYVSWIGAYLFTTVVFSGLLANLLKRAIGRARPDHFHDYGMFSFTPFSGHAAFESFPSGHSTTVGAFFAAFALLFPRYRVAFIACAIWLGMTRVMVGAHYPSDVIAGLAFGGWFSLLTAIVYARCGLLFKLAPDGWPLAKRLFPDIEKPGAL.

A run of 6 helical transmembrane segments spans residues 10 to 30 (LFIT…PVGA), 42 to 62 (ELLT…LLFF), 80 to 100 (ALYV…SGLL), 136 to 156 (FPSG…LLFP), 160 to 180 (VAFI…GAHY), and 183 to 203 (DVIA…IVYA).

It belongs to the lipid A LpxE 1-phosphatase family.

The protein resides in the cell inner membrane. It functions in the pathway bacterial outer membrane biogenesis; LPS lipid A biosynthesis. In terms of biological role, probably removes the 1-phosphate moiety from lipid A species. Does not seem to act on other membrane components, nor does it dephosphorylate the 4'-phosphate group of lipid A and/or lipid A precursors. The chain is Lipid A 1-phosphatase from Rhizobium etli (strain ATCC 51251 / DSM 11541 / JCM 21823 / NBRC 15573 / CFN 42).